A 121-amino-acid chain; its full sequence is Ribosome-binding factor A (121 aa).

It belongs to the RbfA family. Monomer. Binds 30S ribosomal subunits, but not 50S ribosomal subunits or 70S ribosomes.

Its subcellular location is the cytoplasm. In terms of biological role, one of several proteins that assist in the late maturation steps of the functional core of the 30S ribosomal subunit. Associates with free 30S ribosomal subunits (but not with 30S subunits that are part of 70S ribosomes or polysomes). Required for efficient processing of 16S rRNA. May interact with the 5'-terminal helix region of 16S rRNA. The protein is Ribosome-binding factor A of Paraburkholderia xenovorans (strain LB400).